The sequence spans 194 residues: Protein GrpE 1 (194 aa).

The tract at residues 1–22 (MIHNEEEQLEKKIEKNQDPKIN) is disordered.

This sequence belongs to the GrpE family. As to quaternary structure, homodimer.

Its subcellular location is the cytoplasm. In terms of biological role, participates actively in the response to hyperosmotic and heat shock by preventing the aggregation of stress-denatured proteins, in association with DnaK and GrpE. It is the nucleotide exchange factor for DnaK and may function as a thermosensor. Unfolded proteins bind initially to DnaJ; upon interaction with the DnaJ-bound protein, DnaK hydrolyzes its bound ATP, resulting in the formation of a stable complex. GrpE releases ADP from DnaK; ATP binding to DnaK triggers the release of the substrate protein, thus completing the reaction cycle. Several rounds of ATP-dependent interactions between DnaJ, DnaK and GrpE are required for fully efficient folding. The protein is Protein GrpE 1 of Buchnera aphidicola subsp. Acyrthosiphon pisum (strain APS) (Acyrthosiphon pisum symbiotic bacterium).